Here is a 190-residue protein sequence, read N- to C-terminus: UPF0301 protein Reut_A0705 (190 aa).

Belongs to the UPF0301 (AlgH) family.

The sequence is that of UPF0301 protein Reut_A0705 from Cupriavidus pinatubonensis (strain JMP 134 / LMG 1197) (Cupriavidus necator (strain JMP 134)).